The chain runs to 228 residues: N-(5'-phosphoribosyl)anthranilate isomerase (228 aa).

Belongs to the TrpF family.

It carries out the reaction N-(5-phospho-beta-D-ribosyl)anthranilate = 1-(2-carboxyphenylamino)-1-deoxy-D-ribulose 5-phosphate. Its pathway is amino-acid biosynthesis; L-tryptophan biosynthesis; L-tryptophan from chorismate: step 3/5. This is N-(5'-phosphoribosyl)anthranilate isomerase from Azorhizobium caulinodans (strain ATCC 43989 / DSM 5975 / JCM 20966 / LMG 6465 / NBRC 14845 / NCIMB 13405 / ORS 571).